A 1323-amino-acid chain; its full sequence is Receptor tyrosine-protein kinase let-23 (1323 aa).

An N-terminal signal peptide occupies residues 1 to 20; sequence MRYPPSIGSILLIIPIFLTF. At 21–818 the chain is on the extracellular side; it reads FGNSNAQLWK…DIASRQRKTR (798 aa). Asparagine 91 and asparagine 169 each carry an N-linked (GlcNAc...) asparagine glycan. 11 disulfides stabilise this stretch: cysteine 220/cysteine 228, cysteine 224/cysteine 236, cysteine 244/cysteine 251, cysteine 248/cysteine 262, cysteine 263/cysteine 271, cysteine 267/cysteine 279, cysteine 282/cysteine 291, cysteine 295/cysteine 322, cysteine 326/cysteine 337, cysteine 341/cysteine 356, and cysteine 359/cysteine 364. An N-linked (GlcNAc...) asparagine glycan is attached at asparagine 255. N-linked (GlcNAc...) asparagine glycosylation occurs at asparagine 376. Intrachain disulfides connect cysteine 520-cysteine 529, cysteine 524-cysteine 537, cysteine 540-cysteine 549, cysteine 553-cysteine 567, cysteine 570-cysteine 577, cysteine 574-cysteine 585, cysteine 588-cysteine 604, cysteine 608-cysteine 620, cysteine 623-cysteine 632, cysteine 627-cysteine 644, cysteine 647-cysteine 660, cysteine 670-cysteine 693, cysteine 696-cysteine 703, cysteine 700-cysteine 715, cysteine 717-cysteine 731, cysteine 735-cysteine 750, cysteine 753-cysteine 763, cysteine 757-cysteine 771, cysteine 774-cysteine 787, and cysteine 791-cysteine 805. Asparagine 561 carries an N-linked (GlcNAc...) asparagine glycan. N-linked (GlcNAc...) asparagine glycosylation is present at asparagine 655. Asparagine 746 carries an N-linked (GlcNAc...) asparagine glycan. A glycan (N-linked (GlcNAc...) asparagine) is linked at asparagine 776. The chain crosses the membrane as a helical span at residues 819-839; sequence MVIIGSVLFGFAVMFLFILLV. Residues 840-1323 lie on the Cytoplasmic side of the membrane; sequence YWRCQRIGKK…EEVSQKETCL (484 aa). The 268-residue stretch at 885–1152 folds into the Protein kinase domain; that stretch reads TKLDKKLGAG…EFCKVPQLFL (268 aa). ATP-binding positions include 891 to 899 and lysine 919; that span reads LGAGAFGTV. Aspartate 1010 (proton acceptor) is an active-site residue. The segment covering 1265–1289 has biased composition (polar residues); it reads GQTELSPSNGDYYNQPNTPSSSSGY. Residues 1265 to 1323 form a disordered region; the sequence is GQTELSPSNGDYYNQPNTPSSSSGYYNEPHLKTKKPETSEEAEAVQYENEEVSQKETCL. Positions 1293 to 1302 are enriched in basic and acidic residues; it reads PHLKTKKPET. Residues 1303–1315 are compositionally biased toward acidic residues; the sequence is SEEAEAVQYENEE.

It belongs to the protein kinase superfamily. Tyr protein kinase family. EGF receptor subfamily. In terms of tissue distribution, expressed in vulval precursor cells (at protein level). Expressed in ALA neurons, 2 ventral head neurons, a single neuron in the tail, pharyngeal-intestinal valve and posterior arcade epithelial cells.

It is found in the apical cell membrane. The protein localises to the basolateral cell membrane. It carries out the reaction L-tyrosyl-[protein] + ATP = O-phospho-L-tyrosyl-[protein] + ADP + H(+). Its function is as follows. Tyrosine-protein kinase receptor which, upon binding ligand lin-3, activates 2 signaling cascades: the let-60/Ras and MAP kinase signaling pathway and the let-60-independent phospholipase C-mediated Ca(2+) signaling pathway. Each pathway regulates distinct functions. By activating let-60/Ras, regulates larval development, induction of vulva cell precursors during vulva development, male spicule formation and posterior development of the epidermis. Probably by activating phospholipase plc-3 and inositol 1,4,5-trisphosphate receptor itr-1 signaling cascade downstream of ligand lin-3, plays a role in ovulation by promoting ovulatory gonadal sheath cell contractions. Probably by regulating neuronal transmission in ALA neurons, mediates, independently of let-60/Ras, the decrease in pharyngeal pumping and locomotion during the quiescent state that precedes each larval molt, downstream of lin-3 and upstream of plc-3. In Caenorhabditis elegans, this protein is Receptor tyrosine-protein kinase let-23.